Here is a 269-residue protein sequence, read N- to C-terminus: uncharacterized protein (269 aa).

Pro residues predominate over residues 1 to 16 (MTDVPSKPPQTTPPPK). Disordered regions lie at residues 1-110 (MTDV…TISG) and 157-269 (ILQQ…PTIQ). The span at 21–45 (APTTIFSSPPQLPDRSSLNISHTAS) shows a compositional bias: polar residues. Over residues 46–58 (TPTLTPTPLQQQQ) the composition is skewed to low complexity. Residues 80 to 93 (SFSNSPNRQTQSFI) show a composition bias toward polar residues. Over residues 159–181 (QQPQQSHSPQQQQQQHTPNHQQP) the composition is skewed to low complexity. A compositionally biased stretch (polar residues) spans 182–195 (LSPQQQKDLAQKRS). Residues 198-213 (PLPPRPNKNRPLPTPI) are compositionally biased toward pro residues.

This is an uncharacterized protein from Dictyostelium discoideum (Social amoeba).